Consider the following 250-residue polypeptide: uncharacterized protein (250 aa).

2 disordered regions span residues 85 to 107 and 158 to 198; these read NQFP…QSEP and EPVP…AKVP. The segment covering 167-176 has biased composition (low complexity); it reads PAVEQPQVKQ.

This is an uncharacterized protein from Mycoplasma pneumoniae (strain ATCC 29342 / M129 / Subtype 1) (Mycoplasmoides pneumoniae).